A 512-amino-acid polypeptide reads, in one-letter code: SWI/SNF complex subunit SWI3A (512 aa).

The region spanning 13-110 (YTIPAQSSWF…FSSSLKKNDH (98 aa)) is the SWIRM domain. The region spanning 223–274 (SAAAVWTEEEILLLLESVLKHGDDWELISQSVSTKSRLDCISKLIELPFGEF) is the SANT domain. The tract at residues 291–325 (DENTEQVQTDGQEHEETETREEKEDRVNEDEPPAK) is disordered. The stretch at 424–488 (ALGAAAAQAK…IEGVKETIIQ (65 aa)) forms a coiled coil.

As to quaternary structure, homodimers and heterodimers. Interacts with SWI3B, SWI3C, BSH, and the C-terminus of FCA, but not with BRM or SWI3D. Expressed in roots, stems, leaves and flowers, but not in siliques.

The protein localises to the nucleus. Its function is as follows. Component of a multiprotein complex equivalent of the SWI/SNF complex, an ATP-dependent chromatin-remodeling complex, which is required for the positive and negative regulation of gene expression of a large number of genes. It changes chromatin structure by altering DNA-histone contacts within a nucleosome, leading eventually to a change in nucleosome position, thus facilitating or repressing binding of gene-specific transcription factors. In Arabidopsis thaliana (Mouse-ear cress), this protein is SWI/SNF complex subunit SWI3A (SWI3A).